Consider the following 481-residue polypeptide: tRNA sulfurtransferase (481 aa).

The 103-residue stretch at 54-156 (ADGDGPLRHI…GKDVFFYHEI (103 aa)) folds into the THUMP domain. Residues 174–175 (LV), Lys-256, Gly-278, and Gln-287 each bind ATP. A disulfide bond links Cys-334 and Cys-433. The Rhodanese domain maps to 388 to 463 (IPKDAVIIDL…YYSTFSDLKK (76 aa)). Residue Cys-433 is the Cysteine persulfide intermediate of the active site.

The protein belongs to the ThiI family.

It localises to the cytoplasm. It carries out the reaction [ThiI sulfur-carrier protein]-S-sulfanyl-L-cysteine + a uridine in tRNA + 2 reduced [2Fe-2S]-[ferredoxin] + ATP + H(+) = [ThiI sulfur-carrier protein]-L-cysteine + a 4-thiouridine in tRNA + 2 oxidized [2Fe-2S]-[ferredoxin] + AMP + diphosphate. It catalyses the reaction [ThiS sulfur-carrier protein]-C-terminal Gly-Gly-AMP + S-sulfanyl-L-cysteinyl-[cysteine desulfurase] + AH2 = [ThiS sulfur-carrier protein]-C-terminal-Gly-aminoethanethioate + L-cysteinyl-[cysteine desulfurase] + A + AMP + 2 H(+). It functions in the pathway cofactor biosynthesis; thiamine diphosphate biosynthesis. Catalyzes the ATP-dependent transfer of a sulfur to tRNA to produce 4-thiouridine in position 8 of tRNAs, which functions as a near-UV photosensor. Also catalyzes the transfer of sulfur to the sulfur carrier protein ThiS, forming ThiS-thiocarboxylate. This is a step in the synthesis of thiazole, in the thiamine biosynthesis pathway. The sulfur is donated as persulfide by IscS. This Thermoplasma acidophilum (strain ATCC 25905 / DSM 1728 / JCM 9062 / NBRC 15155 / AMRC-C165) protein is tRNA sulfurtransferase.